A 189-amino-acid polypeptide reads, in one-letter code: GTP cyclohydrolase 1 (189 aa).

Positions 78, 81, and 150 each coordinate Zn(2+).

This sequence belongs to the GTP cyclohydrolase I family. In terms of assembly, homomer.

The catalysed reaction is GTP + H2O = 7,8-dihydroneopterin 3'-triphosphate + formate + H(+). The protein operates within cofactor biosynthesis; 7,8-dihydroneopterin triphosphate biosynthesis; 7,8-dihydroneopterin triphosphate from GTP: step 1/1. The chain is GTP cyclohydrolase 1 from Bacillus anthracis (strain A0248).